A 224-amino-acid chain; its full sequence is Ribosome maturation factor RimM (224 aa).

Over residues 1 to 12 the composition is skewed to low complexity; the sequence is MARRPGSSSRGP. Disordered stretches follow at residues 1 to 46 and 204 to 224; these read MARR…PSLV and VADP…DDPG. The PRC barrel domain occupies 137–211; that stretch reads EDEFFLTDLI…KVVADPPEDL (75 aa).

The protein belongs to the RimM family. In terms of assembly, binds ribosomal protein uS19.

The protein localises to the cytoplasm. An accessory protein needed during the final step in the assembly of 30S ribosomal subunit, possibly for assembly of the head region. Essential for efficient processing of 16S rRNA. May be needed both before and after RbfA during the maturation of 16S rRNA. It has affinity for free ribosomal 30S subunits but not for 70S ribosomes. In Methylorubrum populi (strain ATCC BAA-705 / NCIMB 13946 / BJ001) (Methylobacterium populi), this protein is Ribosome maturation factor RimM.